Reading from the N-terminus, the 1099-residue chain is MPKREDIKRILVIGSGPITIGQAAEFDYSGTQALKALKSAGYEVIIVNSNSATIMTDPEFSDAVYIEPLTVEFLEKIIEKERPDALLPTLGGQTALNLAVELAERGILDKYGVQLIGAKLDSIKKAEDRELFKETMEKAGLEVLRSRLVNNLADALETAREFGYPVIIRPSFTLGGTGGGIAFNEEELRDIVTKGLIESPVHTVLIEESVLGWKEYELEVVRDGAGNFIVVCSIENLDPMGIHTGDSITVAPAQTLTDVEYQRMRDAAHKVIDAIGIETGGSNIQFAVDPETGRMVVIEMNPRVSRSSALASKATGYPIAKVAALLAVGFTLDEIPNYITGKTMAAFEPSIDYVVVKIPRFQLEKFPGADPRLNTQMKSVGEVMAIGRTFKEALGKALRSLELDAAPKLDLEHIREHLANPTPERISYIFAAFRNGMDVEEVHELTKIDRWFLREMKACIELEEELKLKKFDVEILKKAKQWGYSDREIAEIWGVSEKEIRKMREDNRIFPVYKMVDTCAAEFEAQTPYYYSTYNGVENEAVPSDREKIMILGSGPNRIGQGIEFDYTNVHGVWAFQEEGYETIMVNSNPETVSTDYDTSDRLYFEPLTVEDVLEIVRNEKPKGVVVAFGGQTPLKIAKYLVEERVNIIGTSFESIEIAEDREKFAKLLKQIGLKCPPFGTASSVEEALRVAENLGYPVLVRPSYVLGGRAMAIVDTPQELEMYVKEAAVVSPGYPVLIDKFLEDAIELDVDVVSDGKYVWIAGLMEQIEEAGVHSGDSACVLPPVSLSEKLVEEIEETVYKLVKALKVVGVANIQLAVKDEEIYIIEANPRASRTVPFVSKAIGIPVARIAAKIMVGRNLPELLSEYFPYPTRPGVKVDKLGESEILPTPWPKMFSVKEVVIPFHKFPGTDVLLGPEMRSTGEVMGIGEDFAEAFAKAQIAAGNPLPTTGAILATVADKDKREAVPLLAHLADMGFEIYATRGTAKALQSHGVEVKVVPKVGEGRPDVIDLLEQGKISLVVITQSSDEPALVAVSHGKEPFKVEGRRTVGYMIRTTALKRKIPYLTTVESLRAAVAAIRKMKKGSIVKVRRLTDTWKM.

Residues Met-1–Glu-402 are carboxyphosphate synthetic domain. ATP-binding residues include Arg-129, Arg-169, Gly-175, Gly-176, Glu-208, Val-210, Glu-215, Gly-241, Ile-242, His-243, Gln-285, and Glu-299. One can recognise an ATP-grasp 1 domain in the interval Lys-133–Val-328. Mg(2+)-binding residues include Gln-285, Glu-299, and Asn-301. The Mn(2+) site is built by Gln-285, Glu-299, and Asn-301. The interval Leu-403–Ala-541 is oligomerization domain. The carbamoyl phosphate synthetic domain stretch occupies residues Val-542 to Gly-944. One can recognise an ATP-grasp 2 domain in the interval Ala-666–Val-857. ATP-binding residues include Arg-702, Lys-741, Leu-743, Glu-748, Gly-773, Val-774, His-775, Ser-776, Gln-816, and Glu-828. Residues Gln-816, Glu-828, and Asn-830 each coordinate Mg(2+). Positions 816, 828, and 830 each coordinate Mn(2+). Residues Asn-945–Met-1099 form the MGS-like domain. The allosteric domain stretch occupies residues Asn-945–Met-1099.

It belongs to the CarB family. As to quaternary structure, composed of two chains; the small (or glutamine) chain promotes the hydrolysis of glutamine to ammonia, which is used by the large (or ammonia) chain to synthesize carbamoyl phosphate. Tetramer of heterodimers (alpha,beta)4. Mg(2+) is required as a cofactor. The cofactor is Mn(2+).

The catalysed reaction is hydrogencarbonate + L-glutamine + 2 ATP + H2O = carbamoyl phosphate + L-glutamate + 2 ADP + phosphate + 2 H(+). It carries out the reaction hydrogencarbonate + NH4(+) + 2 ATP = carbamoyl phosphate + 2 ADP + phosphate + 2 H(+). It participates in amino-acid biosynthesis; L-arginine biosynthesis; carbamoyl phosphate from bicarbonate: step 1/1. Its pathway is pyrimidine metabolism; UMP biosynthesis via de novo pathway; (S)-dihydroorotate from bicarbonate: step 1/3. Large subunit of the glutamine-dependent carbamoyl phosphate synthetase (CPSase). CPSase catalyzes the formation of carbamoyl phosphate from the ammonia moiety of glutamine, carbonate, and phosphate donated by ATP, constituting the first step of 2 biosynthetic pathways, one leading to arginine and/or urea and the other to pyrimidine nucleotides. The large subunit (synthetase) binds the substrates ammonia (free or transferred from glutamine from the small subunit), hydrogencarbonate and ATP and carries out an ATP-coupled ligase reaction, activating hydrogencarbonate by forming carboxy phosphate which reacts with ammonia to form carbamoyl phosphate. The polypeptide is Carbamoyl phosphate synthase large chain (Thermotoga sp. (strain RQ2)).